A 359-amino-acid chain; its full sequence is Protein RecA (359 aa).

ATP is bound at residue 64–71 (GHESSGKT). Residues 329-359 (KYSNKDSNDSPKEGSKIKTKVNPAVTQDELI) form a disordered region. Over residues 331–344 (SNKDSNDSPKEGSK) the composition is skewed to basic and acidic residues.

The protein belongs to the RecA family.

It localises to the cytoplasm. Its function is as follows. Can catalyze the hydrolysis of ATP in the presence of single-stranded DNA, the ATP-dependent uptake of single-stranded DNA by duplex DNA, and the ATP-dependent hybridization of homologous single-stranded DNAs. It interacts with LexA causing its activation and leading to its autocatalytic cleavage. The chain is Protein RecA from Francisella tularensis subsp. tularensis (strain FSC 198).